The following is a 112-amino-acid chain: Nucleoid-associated protein lpg2755 (112 aa).

It belongs to the YbaB/EbfC family. Homodimer.

The protein localises to the cytoplasm. It is found in the nucleoid. Functionally, binds to DNA and alters its conformation. May be involved in regulation of gene expression, nucleoid organization and DNA protection. The chain is Nucleoid-associated protein lpg2755 from Legionella pneumophila subsp. pneumophila (strain Philadelphia 1 / ATCC 33152 / DSM 7513).